Consider the following 461-residue polypeptide: Protein ultraspiracle homolog (461 aa).

Positions 1-112 (MSSVAKKDKR…NHPLSGSKHL (112 aa)) are modulating. Residues 26–51 (PAPHQQQSMPSSQPSNFLQPLATPST) are disordered. Positions 27-40 (APHQQQSMPSSQPS) are enriched in low complexity. The span at 41 to 51 (NFLQPLATPST) shows a compositional bias: polar residues. 2 NR C4-type zinc fingers span residues 113 to 133 (CSIC…CEGC) and 149 to 173 (CRED…YQKC). Residues 113–185 (CSICGDRASG…CGMKREAVQE (73 aa)) constitute a DNA-binding region (nuclear receptor). The segment at 185 to 192 (EERQRAAR) is hinge. The NR LBD domain occupies 203–452 (VQELSIERLL…SYIHDALRNH (250 aa)).

This sequence belongs to the nuclear hormone receptor family. NR2 subfamily. Heterodimer of USP and ECR. Only the heterodimer is capable of high-affinity binding to ecdysone.

The protein localises to the nucleus. Its function is as follows. Receptor for ecdysone. May be an important modulator of insect metamorphosis. In Manduca sexta (Tobacco hawkmoth), this protein is Protein ultraspiracle homolog (USP).